The following is a 681-amino-acid chain: DNA ligase (681 aa).

NAD(+) contacts are provided by residues 34–38 (DEEYD), 83–84 (SL), and Glu-112. Lys-114 acts as the N6-AMP-lysine intermediate in catalysis. Arg-135, Glu-169, Lys-285, and Lys-309 together coordinate NAD(+). Residues Cys-403, Cys-406, Cys-422, and Cys-427 each coordinate Zn(2+). A BRCT domain is found at 584 to 673 (TTSNILDGLT…GVELKESWKK (90 aa)).

Belongs to the NAD-dependent DNA ligase family. LigA subfamily. Mg(2+) is required as a cofactor. Mn(2+) serves as cofactor.

The enzyme catalyses NAD(+) + (deoxyribonucleotide)n-3'-hydroxyl + 5'-phospho-(deoxyribonucleotide)m = (deoxyribonucleotide)n+m + AMP + beta-nicotinamide D-nucleotide.. DNA ligase that catalyzes the formation of phosphodiester linkages between 5'-phosphoryl and 3'-hydroxyl groups in double-stranded DNA using NAD as a coenzyme and as the energy source for the reaction. It is essential for DNA replication and repair of damaged DNA. This Fervidobacterium nodosum (strain ATCC 35602 / DSM 5306 / Rt17-B1) protein is DNA ligase.